Reading from the N-terminus, the 691-residue chain is Choline transporter-like 1 (691 aa).

The segment covering 1-10 (MGCAESKDGE) has biased composition (basic and acidic residues). The segment at 1 to 20 (MGCAESKDGEGEAQNNRPKY) is disordered. A run of 3 helical transmembrane segments spans residues 28-48 (WLAI…FSFV), 205-225 (WHII…LVTM), and 232-252 (IVSW…TVAL). N261 carries N-linked (GlcNAc...) asparagine glycosylation. Helical transmembrane passes span 282 to 302 (VLTL…VIYF) and 332 to 352 (LLAF…IICL). A glycan (N-linked (GlcNAc...) asparagine) is linked at N385. 4 helical membrane-spanning segments follow: residues 408–428 (SMFW…FACQ), 527–547 (VVAI…NAMA), 562–582 (FILF…GIVL), and 591–611 (FYMA…HIIL).

It belongs to the CTL (choline transporter-like) family.

The protein resides in the membrane. The polypeptide is Choline transporter-like 1 (Drosophila melanogaster (Fruit fly)).